We begin with the raw amino-acid sequence, 163 residues long: UPF0763 protein CJJ81176_1011 (163 aa).

Belongs to the UPF0763 family.

This Campylobacter jejuni subsp. jejuni serotype O:23/36 (strain 81-176) protein is UPF0763 protein CJJ81176_1011.